The primary structure comprises 448 residues: Dual specificity mitogen-activated protein kinase kinase 5 (448 aa).

Positions 18 to 25 are interaction with MAPK7; the sequence is VIRIKIPN. A PB1 domain is found at 18 to 109; that stretch reads VIRIKIPNSG…EPLQIFPRAC (92 aa). The tract at residues 64 to 68 is interaction with MAP3K2/MAP3K3; sequence DEDGD. Positions 116-144 are disordered; that stretch reads NIHGLKVNTRAGPSQHTSPVVSDSLPSNS. Residues 117–131 form an interaction with MAPK7 region; the sequence is IHGLKVNTRAGPSQH. Over residues 126–144 the composition is skewed to polar residues; the sequence is AGPSQHTSPVVSDSLPSNS. One can recognise a Protein kinase domain in the interval 166–419; sequence IRYRDTLGHG…PEELMGHPFI (254 aa). ATP contacts are provided by residues 172–180 and Lys-195; that span reads LGHGNGGTV. The active-site Proton acceptor is Asp-283. A Phosphoserine modification is found at Ser-311. The residue at position 315 (Thr-315) is a Phosphothreonine.

It belongs to the protein kinase superfamily. STE Ser/Thr protein kinase family. MAP kinase kinase subfamily. In terms of assembly, interacts with PARD6A, MAP3K3 and MAPK7. Forms a complex with SQSTM1 and PRKCZ or PRKCI. Requires Mg(2+) as cofactor. Post-translationally, activated by phosphorylation on Ser/Thr by MAP kinase kinase kinases. In terms of tissue distribution, expressed in the liver and brain (at protein level). Expressed in the liver, muscle, testes, lung, kidney, spleen, heart and brain (at protein level).

The protein localises to the cytoplasm. It localises to the cytosol. The protein resides in the membrane. The enzyme catalyses L-seryl-[protein] + ATP = O-phospho-L-seryl-[protein] + ADP + H(+). It catalyses the reaction L-threonyl-[protein] + ATP = O-phospho-L-threonyl-[protein] + ADP + H(+). It carries out the reaction L-tyrosyl-[protein] + ATP = O-phospho-L-tyrosyl-[protein] + ADP + H(+). In terms of biological role, acts as a scaffold for the formation of a ternary MAP3K2/MAP3K3-MAP3K5-MAPK7 signaling complex. Activation of this pathway appears to play a critical role in protecting cells from stress-induced apoptosis, neuronal survival and cardiac development and angiogenesis. As part of the MAPK/ERK signaling pathway, acts as a negative regulator of apoptosis in cardiomyocytes via promotion of STUB1/CHIP-mediated ubiquitination and degradation of ICER-type isoforms of CREM. This Rattus norvegicus (Rat) protein is Dual specificity mitogen-activated protein kinase kinase 5 (Map2k5).